A 239-amino-acid chain; its full sequence is MLVLFVATWSDLGLCKKRPKPGGWNTGGSRYPGQSSPGGNRYPPQSGGWGQPHGGGWGQPHGGGWGQPHGGGWGQPHGGGWGQGGGTHNQWNKPSKPKTNMKHMAGAAAAGAVVGGLGGYMLGSAMSRPLIHFGNDYEDRYYRENMYRYPNQVYYRPVDQYSNQNNFVHDCVNITIKQHTVTTTTKGENFTETDVKIMERVVEQMCITQYEKESQAYYQRGSSMVLFSSPPVILLISFL.

A signal peptide spans 1-15 (MLVLFVATWSDLGLC). The tract at residues 15-98 (CKKRPKPGGW…NQWNKPSKPK (84 aa)) is disordered. The segment at 16-31 (KKRPKPGGWNTGGSRY) is interaction with ADGRG6. An interaction with GRB2, ERI3 and SYN1 region spans residues 16–222 (KKRPKPGGWN…ESQAYYQRGS (207 aa)). 5 tandem repeats follow at residues 44–51 (PQSGGWGQ), 52–59 (PHGGGWGQ), 60–67 (PHGGGWGQ), 68–75 (PHGGGWGQ), and 76–83 (PHGGGWGQ). The tract at residues 44 to 83 (PQSGGWGQPHGGGWGQPHGGGWGQPHGGGWGQPHGGGWGQ) is 5 X 8 AA tandem repeats of P-H-G-G-G-W-G-Q. Residues 47 to 87 (GGWGQPHGGGWGQPHGGGWGQPHGGGWGQPHGGGWGQGGGT) show a composition bias toward gly residues. Cu(2+) contacts are provided by H53, G54, G55, H61, G62, G63, H69, G70, G71, H77, G78, and G79. A disulfide bridge connects residues C171 and C206. N-linked (GlcNAc...) asparagine glycosylation is found at N173 and N189. Residue S222 is the site of GPI-anchor amidated serine attachment. Positions 223–239 (SMVLFSSPPVILLISFL) are cleaved as a propeptide — removed in mature form.

Belongs to the prion family. In terms of assembly, monomer and homodimer. Has a tendency to aggregate into amyloid fibrils containing a cross-beta spine, formed by a steric zipper of superposed beta-strands. Soluble oligomers may represent an intermediate stage on the path to fibril formation. Copper binding may promote oligomerization. Interacts with GRB2, APP, ERI3/PRNPIP and SYN1. Mislocalized cytosolically exposed PrP interacts with MGRN1; this interaction alters MGRN1 subcellular location and causes lysosomal enlargement. Interacts with APP. Interacts with KIAA1191. Interacts with ADGRG6.

Its subcellular location is the cell membrane. The protein resides in the golgi apparatus. In terms of biological role, its primary physiological function is unclear. May play a role in neuronal development and synaptic plasticity. May be required for neuronal myelin sheath maintenance. May promote myelin homeostasis through acting as an agonist for ADGRG6 receptor. May play a role in iron uptake and iron homeostasis. Soluble oligomers are toxic to cultured neuroblastoma cells and induce apoptosis (in vitro). Association with GPC1 (via its heparan sulfate chains) targets PRNP to lipid rafts. Also provides Cu(2+) or Zn(2+) for the ascorbate-mediated GPC1 deaminase degradation of its heparan sulfate side chains. This is Major prion protein (PRNP) from Aotus trivirgatus (Three-striped night monkey).